The chain runs to 291 residues: tRNA (guanine-N(1)-)-methyltransferase (291 aa).

S-adenosyl-L-methionine is bound by residues Gly160 and 184-189 (IGDYVL).

It belongs to the RNA methyltransferase TrmD family. As to quaternary structure, homodimer.

It is found in the cytoplasm. The catalysed reaction is guanosine(37) in tRNA + S-adenosyl-L-methionine = N(1)-methylguanosine(37) in tRNA + S-adenosyl-L-homocysteine + H(+). Its function is as follows. Specifically methylates guanosine-37 in various tRNAs. The sequence is that of tRNA (guanine-N(1)-)-methyltransferase from Corynebacterium efficiens (strain DSM 44549 / YS-314 / AJ 12310 / JCM 11189 / NBRC 100395).